The primary structure comprises 214 residues: Killer cell lectin-like receptor subfamily B member 1 (214 aa).

At 1-42 (MDAPVLYAELNLAETRGLRCTSAPSLPQDACQGPGWHRVALK) the chain is on the cytoplasmic side. Residues 43 to 63 (LGCAGLIFLLMVLSVLVGFLV) form a helical; Signal-anchor for type II membrane protein membrane-spanning segment. Residues 64–214 (QKPLIEKCSV…WICQKTLKHV (151 aa)) lie on the Extracellular side of the membrane. The C-type lectin domain occupies 98 to 208 (HCDKCLFTSQ…CSSDNHWICQ (111 aa)). Cystine bridges form between Cys-119-Cys-207 and Cys-186-Cys-199.

The protein resides in the membrane. The chain is Killer cell lectin-like receptor subfamily B member 1 (Klrb1) from Mus musculus (Mouse).